We begin with the raw amino-acid sequence, 479 residues long: Cardiolipin synthase A (479 aa).

A run of 2 helical transmembrane segments spans residues 8 to 28 (FFGYVLGFIHLLGTGAAIHAL) and 38 to 58 (IAWAMPLLFIPYFTLLPYLVF). 2 consecutive PLD phosphodiesterase domains span residues 218 to 245 (INFRNHRKIVVVDGLKGYIGGHNVGDEY) and 392 to 419 (EPGFLHQKVVLVDNEITAIGSANLDNRS). Active-site residues include H223, K225, D230, H397, K399, and D404.

It belongs to the phospholipase D family. Cardiolipin synthase subfamily. ClsA sub-subfamily.

It localises to the cell inner membrane. The catalysed reaction is 2 a 1,2-diacyl-sn-glycero-3-phospho-(1'-sn-glycerol) = a cardiolipin + glycerol. Functionally, catalyzes the reversible phosphatidyl group transfer from one phosphatidylglycerol molecule to another to form cardiolipin (CL) (diphosphatidylglycerol) and glycerol. The polypeptide is Cardiolipin synthase A (Pseudomonas syringae pv. syringae (strain B728a)).